Here is a 260-residue protein sequence, read N- to C-terminus: Major prion protein (260 aa).

The signal sequence occupies residues 1 to 22 (MANLGCWMLVLFVATWSDLGLC). Residues 23–237 (KKRPKPGGWN…ESQAYYQRGS (215 aa)) are interaction with GRB2, ERI3 and SYN1. Residues 26–112 (PKPGGWNTGG…HNQWNKPSKP (87 aa)) form a disordered region. 6 repeat units span residues 51–58 (PQGGGWGQ), 59–66 (PHGGGWGQ), 67–74 (PHGGGWGQ), 75–82 (PHGGGWGQ), 83–90 (PHGGGWGQ), and 91–98 (PHGGGWGQ). The segment at 51-98 (PQGGGWGQPHGGGWGQPHGGGWGQPHGGGWGQPHGGGWGQPHGGGWGQ) is 6 X 8 AA tandem repeats of P-H-G-G-G-W-G-Q. Positions 52-102 (QGGGWGQPHGGGWGQPHGGGWGQPHGGGWGQPHGGGWGQPHGGGWGQGGGT) are enriched in gly residues. Cu(2+)-binding residues include H68, G69, G70, H76, G77, G78, H84, G85, G86, H92, G93, and G94. Cysteines 186 and 221 form a disulfide. N-linked (GlcNAc...) asparagine glycans are attached at residues N188 and N204. A lipid anchor (GPI-anchor amidated serine) is attached at S237. A propeptide spans 238 to 260 (SMVLFSSPPVILLISFLIFLIVG) (removed in mature form).

It belongs to the prion family. Monomer and homodimer. Has a tendency to aggregate into amyloid fibrils containing a cross-beta spine, formed by a steric zipper of superposed beta-strands. Soluble oligomers may represent an intermediate stage on the path to fibril formation. Copper binding may promote oligomerization. Interacts with GRB2, APP, ERI3/PRNPIP and SYN1. Mislocalized cytosolically exposed PrP interacts with MGRN1; this interaction alters MGRN1 subcellular location and causes lysosomal enlargement. Interacts with KIAA1191.

The protein localises to the cell membrane. It localises to the golgi apparatus. Its function is as follows. Its primary physiological function is unclear. Has cytoprotective activity against internal or environmental stresses. May play a role in neuronal development and synaptic plasticity. May be required for neuronal myelin sheath maintenance. May play a role in iron uptake and iron homeostasis. Soluble oligomers are toxic to cultured neuroblastoma cells and induce apoptosis (in vitro). Association with GPC1 (via its heparan sulfate chains) targets PRNP to lipid rafts. Also provides Cu(2+) or Zn(2+) for the ascorbate-mediated GPC1 deaminase degradation of its heparan sulfate side chains. The polypeptide is Major prion protein (PRNP) (Saimiri sciureus (Common squirrel monkey)).